A 651-amino-acid polypeptide reads, in one-letter code: LEAF RUST 10 DISEASE-RESISTANCE LOCUS RECEPTOR-LIKE PROTEIN KINASE-like 1.2 (651 aa).

Residues 1–26 (MNPSTPSLLYTSIFFYFTIIATQTLS) form the signal peptide. Residues 27–264 (LDPKFKACEP…NDKRRRVIVK (238 aa)) lie on the Extracellular side of the membrane. N-linked (GlcNAc...) asparagine glycosylation is found at Asn88, Asn114, Asn130, Asn136, Asn155, Asn193, and Asn213. A helical transmembrane segment spans residues 265–285 (VLIGASAAVVGLIAASIFWYV). At 286–651 (YHRRKTKSYR…DSVIVKWDSK (366 aa)) the chain is on the cytoplasmic side. A Protein kinase domain is found at 341 to 613 (FDPSKELGDG…PCMSHVQDTL (273 aa)). ATP contacts are provided by residues 347–355 (LGDGGFGTV) and Lys369. Tyr415 carries the post-translational modification Phosphotyrosine. Asp465 (proton acceptor) is an active-site residue. Ser498 is subject to Phosphoserine. 2 positions are modified to phosphothreonine: Thr499 and Thr504. The residue at position 512 (Tyr512) is a Phosphotyrosine.

This sequence belongs to the protein kinase superfamily. Ser/Thr protein kinase family.

It localises to the cell membrane. The protein resides in the membrane. The catalysed reaction is L-seryl-[protein] + ATP = O-phospho-L-seryl-[protein] + ADP + H(+). The enzyme catalyses L-threonyl-[protein] + ATP = O-phospho-L-threonyl-[protein] + ADP + H(+). Probable receptor-like serine/threonine-protein kinase involved in abscisic acid (ABA) signaling. Acts as a positive regulator of abiotic stress response. This Arabidopsis thaliana (Mouse-ear cress) protein is LEAF RUST 10 DISEASE-RESISTANCE LOCUS RECEPTOR-LIKE PROTEIN KINASE-like 1.2.